The following is a 1121-amino-acid chain: MDALEDYVWPRATSELILLPVTGLECVGDRLLAGEGPDVLVYSLDFGGHLRMIKRVQNLLGHYLIHGFRVRPEPNGDLDLEAMVAVFGSKGLRVVKISWGQGHFWELWRSGLWNMSDWIWDARWLEGNIALALGHNSVVLYDPVVGCILQEVPCTDRCTLSSACLIGDAWKELTIVAGAVSNQLLVWYPATALADNKPVAPDRRISGHVGIIFSMSYLESKGLLATASEDRSVRIWKVGDLRVPGGRVQNIGHCFGHSARVWQVKLLENYLISAGEDCVCLVWSHEGEILQAFRGHQGRGIRAIAAHERQAWVITGGDDSGIRLWHLVGRGYRGLGVSALCFKSRSRPGTLKAVTLAGSWRLLAVTDTGALYLYDVEVKCWEQLLEDKHFQSYCLLEAAPGPEGFGLCAMANGEGRVKVVPINTPTAAVDQTLFPGKVHSLSWALRGYEELLLLASGPGGVVACLEISAAPSGKAIFVKERCRYLLPPSKQRWHTCSAFLPPGDFLVCGDRRGSVLLFPSRPGLLKDPGVGGKARAGAGAPVVGSGSSGGGNAFTGLGPVSTLPSLHGKQGVTSVTCHGGYVYTTGRDGAYYQLFVRDGQLQPVLRQKSCRGMNWLAGLRIVPDGSMVILGFHANEFVVWNPRSHEKLHIVNCGGGHRSWAFSDTEAAMAFAYLKDGDVMLYRALGGCTRPHVILREGLHGREITCVKRVGTITLGPEYGVPSFMQPDDLEPGSEGPDLTDIVITCSEDTTVCVLALPTTTGSAHALTAVCNHISSVRAVAVWGIGTPGGPQDPQPGLTAHVVSAGGRAEMHCFSIMVTPDPSTPSRLACHVMHLSSHRLDEYWDRQRNRHRMVKVDPETRYMSLAVCELDQPGLGPLVAAACSDGAVRLFLLQDSGRILQLLAETFHHKRCVLKVHSFTHEAPNQRRRLLLCSAATDGSLAFWDLTTMLDHDSTVLEPPVDPGLPYRLGTPSLTLQAHSCGINSLHTLPTREGHHLVASGSEDGSLHVFVLAVEMLQLEEAVGEAGLVPQLRVLEEYSVPCAHAAHVTGLKILSPSIMVSASIDQRLTFWRLGHGEPTFMNSTVFHVPDVADMDCWPVSPEFGHRCALGGQGLEVYNWYD.

Met-1 bears the N-acetylmethionine mark. 19 WD repeats span residues 53–97, 105–143, 147–189, 200–238, 247–285, 289–327, 335–376, 381–422, 425–470, 476–520, 559–598, 604–642, 645–684, 739–785, 848–893, 901–946, 970–1012, 1036–1073, and 1079–1121; these read IKRV…VVKI, WELW…LYDP, CILQ…VWYP, APDR…IWKV, RVQN…VWSH, ILQA…LWHL, LGVS…LYDV, WEQL…VVPI, PTAA…ISAA, IFVK…LFPS, PVST…FVRD, VLRQ…VWNP, HEKL…LYRA, LTDI…VWGI, RNRH…LFLL, QLLA…FWDL, GTPS…VFVL, EEYS…FWRL, and TFMN…NWYD.

It belongs to the WD repeat WDR6 family. Interacts with FTSJ1; the interaction is direct, and required for 2'-O-methylation of position 34 in substrate tRNAs. Interacts with IRS4. Interacts with STK11/LKB1. Ubiquitous.

Its subcellular location is the cytoplasm. Its function is as follows. Together with methyltransferase FTSJ1, methylates the 2'-O-ribose of nucleotides at position 34 of the tRNA anticodon loop of substrate tRNAs. Required for the correct positioning of the substrate tRNA for methylation. Required to suppress amino acid starvation-induced autophagy. Enhances the STK11/LKB1-induced cell growth suppression activity. In Homo sapiens (Human), this protein is tRNA (34-2'-O)-methyltransferase regulator WDR6 (WDR6).